The following is a 444-amino-acid chain: Transcriptional coactivator nsrH (444 aa).

Positions 74 to 144 (ASQVSEILAC…ERDHVAHTPL (71 aa)) constitute an HTH iclR-type domain. The segment at residues 104–123 (IKDIADLTNVPESRLRRIIR) is a DNA-binding region (H-T-H motif).

Its subcellular location is the nucleus. Functionally, transcriptional coactivator; part of the gene cluster that mediates the biosynthesis of the tetrahydroxanthone dimer neosartorin, which exhibits antibacterial activity. The sequence is that of Transcriptional coactivator nsrH from Aspergillus novofumigatus (strain IBT 16806).